Consider the following 173-residue polypeptide: Large ribosomal subunit protein uL10 (173 aa).

Belongs to the universal ribosomal protein uL10 family. Part of the ribosomal stalk of the 50S ribosomal subunit. The N-terminus interacts with L11 and the large rRNA to form the base of the stalk. The C-terminus forms an elongated spine to which L12 dimers bind in a sequential fashion forming a multimeric L10(L12)X complex.

Its function is as follows. Forms part of the ribosomal stalk, playing a central role in the interaction of the ribosome with GTP-bound translation factors. The sequence is that of Large ribosomal subunit protein uL10 from Geobacter sp. (strain M21).